The following is a 139-amino-acid chain: D-ribose pyranase (139 aa).

Histidine 20 (proton donor) is an active-site residue. Substrate-binding positions include aspartate 28, histidine 106, and 128–130 (FAN).

Belongs to the RbsD / FucU family. RbsD subfamily. Homodecamer.

Its subcellular location is the cytoplasm. It carries out the reaction beta-D-ribopyranose = beta-D-ribofuranose. It functions in the pathway carbohydrate metabolism; D-ribose degradation; D-ribose 5-phosphate from beta-D-ribopyranose: step 1/2. Its function is as follows. Catalyzes the interconversion of beta-pyran and beta-furan forms of D-ribose. The protein is D-ribose pyranase of Yersinia enterocolitica serotype O:8 / biotype 1B (strain NCTC 13174 / 8081).